The primary structure comprises 351 residues: ADP-glucose phosphorylase (351 aa).

Residues 1 to 63 (MTSPSHASDR…QNPNPKPSSC (63 aa)) form a disordered region. 41 to 44 (RAKR) serves as a coordination point for ADP-alpha-D-glucose. Residues cysteine 63 and cysteine 66 each coordinate Zn(2+). Residues 72-74 (ECA) and asparagine 94 contribute to the ADP-alpha-D-glucose site. Position 133 (histidine 133) interacts with Zn(2+). Residues asparagine 173 and 179 to 182 (GASM) each bind ADP-alpha-D-glucose. Residue histidine 184 coordinates Zn(2+). Residue histidine 186 is the Tele-AMP-histidine intermediate of the active site. An ADP-alpha-D-glucose-binding site is contributed by glutamine 188. Residues cysteine 216, cysteine 219, histidine 255, and histidine 310 each coordinate Zn(2+). ADP-alpha-D-glucose-binding positions include glycine 321 and 325–326 (FE).

Belongs to the galactose-1-phosphate uridylyltransferase type 1 family. As to quaternary structure, homodimer. Requires Zn(2+) as cofactor.

It carries out the reaction alpha-D-glucose 1-phosphate + ADP + H(+) = ADP-alpha-D-glucose + phosphate. In terms of biological role, catalyzes the conversion of ADP-glucose and inorganic phosphate (Pi) into glucose-1-phosphate and ADP. Does not possess galactose-1-phosphate uridylyltransferase activity. This is ADP-glucose phosphorylase from Arabidopsis thaliana (Mouse-ear cress).